Reading from the N-terminus, the 157-residue chain is Nicotinate dehydrogenase small FeS subunit (157 aa).

A 2Fe-2S ferredoxin-type domain is found at 4 to 80 (ITINLNLNGE…ESTIITLEGV (77 aa)). [2Fe-2S] cluster is bound by residues C42, C47, C50, C62, C101, C104, C136, and C138.

In terms of assembly, heterooctamer of NDHM, NDHL, NDHS and NDHF. Dimer of heterotetramers. It depends on [2Fe-2S] cluster as a cofactor.

The enzyme catalyses nicotinate + NADP(+) + H2O = 6-hydroxynicotinate + NADPH + H(+). It functions in the pathway cofactor degradation; nicotinate degradation; 6-hydroxynicotinate from nicotinate: step 1/1. With respect to regulation, reversibly inactivated by selenide and sulfide. Not inhibited by cyanide. Catalyzes the hydroxylation of nicotinate to 6-hydroxynicotinate. Also active against 2-pyrazinecarboxylic acid, but inactive against other nicotinate analogs. The chain is Nicotinate dehydrogenase small FeS subunit (ndhS) from Eubacterium barkeri (Clostridium barkeri).